We begin with the raw amino-acid sequence, 414 residues long: Tyrosine--tRNA ligase (414 aa).

The 'HIGH' region signature appears at 57–66 (PSAPDVHIGH). Residues 241–245 (KMSKS) carry the 'KMSKS' region motif. Lys244 is a binding site for ATP. One can recognise an S4 RNA-binding domain in the interval 352–413 (VPLIDLLVTL…GKRKFAKLSL (62 aa)).

This sequence belongs to the class-I aminoacyl-tRNA synthetase family. TyrS type 2 subfamily. As to quaternary structure, homodimer.

Its subcellular location is the cytoplasm. It carries out the reaction tRNA(Tyr) + L-tyrosine + ATP = L-tyrosyl-tRNA(Tyr) + AMP + diphosphate + H(+). In terms of biological role, catalyzes the attachment of tyrosine to tRNA(Tyr) in a two-step reaction: tyrosine is first activated by ATP to form Tyr-AMP and then transferred to the acceptor end of tRNA(Tyr). The sequence is that of Tyrosine--tRNA ligase from Shouchella clausii (strain KSM-K16) (Alkalihalobacillus clausii).